Reading from the N-terminus, the 101-residue chain is Small ribosomal subunit protein uS14 (101 aa).

It belongs to the universal ribosomal protein uS14 family. Part of the 30S ribosomal subunit. Contacts proteins S3 and S10.

In terms of biological role, binds 16S rRNA, required for the assembly of 30S particles and may also be responsible for determining the conformation of the 16S rRNA at the A site. The polypeptide is Small ribosomal subunit protein uS14 (Hyphomonas neptunium (strain ATCC 15444)).